A 237-amino-acid polypeptide reads, in one-letter code: DNA repair protein RecO (237 aa).

The protein belongs to the RecO family.

Its function is as follows. Involved in DNA repair and RecF pathway recombination. This chain is DNA repair protein RecO, found in Rickettsia conorii (strain ATCC VR-613 / Malish 7).